The chain runs to 207 residues: Ribosomal RNA small subunit methyltransferase G (207 aa).

Residues G74, L79, 125-126 (VE), and R140 each bind S-adenosyl-L-methionine.

It belongs to the methyltransferase superfamily. RNA methyltransferase RsmG family.

The protein resides in the cytoplasm. The enzyme catalyses guanosine(527) in 16S rRNA + S-adenosyl-L-methionine = N(7)-methylguanosine(527) in 16S rRNA + S-adenosyl-L-homocysteine. Functionally, specifically methylates the N7 position of guanine in position 527 of 16S rRNA. In Shewanella pealeana (strain ATCC 700345 / ANG-SQ1), this protein is Ribosomal RNA small subunit methyltransferase G.